Reading from the N-terminus, the 290-residue chain is Sodium/potassium-transporting ATPase subunit beta-2 (290 aa).

At 1–39 (MVIQKEKKSCGQVVEEWKEFVWNPRTHQFMGRTGTSWAF) the chain is on the cytoplasmic side. Residues 40–67 (ILLFYLVFYGFLTAMFTLTMWVMLQTVS) traverse the membrane as a helical; Signal-anchor for type II membrane protein segment. Residues 68 to 290 (DHTPKYQDRL…VAFKLRINKT (223 aa)) lie on the Extracellular side of the membrane. 2 N-linked (GlcNAc...) asparagine glycosylation sites follow: Asn96 and Asn118. An intrachain disulfide couples Cys129 to Cys150. N-linked (GlcNAc...) asparagine glycosylation is present at Asn153. Cys160 and Cys177 are joined by a disulfide. Residues Asn193, Asn197, and Asn238 are each glycosylated (N-linked (GlcNAc...) asparagine). The segment at 193–289 (NQSMNVTCVG…RVAFKLRINK (97 aa)) is immunoglobulin-like. A disulfide bridge links Cys200 with Cys261.

Belongs to the X(+)/potassium ATPases subunit beta family. As to quaternary structure, the sodium/potassium-transporting ATPase is composed of a catalytic alpha subunit, an auxiliary non-catalytic beta subunit and an additional regulatory subunit. Interacts with BSG.

It localises to the cell membrane. In terms of biological role, this is the non-catalytic component of the active enzyme, which catalyzes the hydrolysis of ATP coupled with the exchange of Na(+) and K(+) ions across the plasma membrane. The exact function of the beta-2 subunit is not known. Functionally, mediates cell adhesion of neurons and astrocytes, and promotes neurite outgrowth. In Bos taurus (Bovine), this protein is Sodium/potassium-transporting ATPase subunit beta-2 (ATP1B2).